Consider the following 620-residue polypeptide: Glutathione-regulated potassium-efflux system protein KefC (620 aa).

The next 12 membrane-spanning stretches (helical) occupy residues His4 to Val24, Leu26 to Leu46, Ser54 to Leu74, Gly90 to Leu110, Val114 to Met134, Phe149 to Leu169, Met178 to Leu198, Val218 to Gly238, Gly270 to Leu290, Leu294 to Ile314, Trp327 to Gln347, and Ser359 to Asn379. The 120-residue stretch at Gln399 to Thr518 folds into the RCK N-terminal domain. The tract at residues Gly597–Ser620 is disordered.

The protein belongs to the monovalent cation:proton antiporter 2 (CPA2) transporter (TC 2.A.37) family. KefC subfamily. Homodimer. Interacts with the regulatory subunit KefF.

It localises to the cell inner membrane. Functionally, pore-forming subunit of a potassium efflux system that confers protection against electrophiles. Catalyzes K(+)/H(+) antiport. The chain is Glutathione-regulated potassium-efflux system protein KefC from Escherichia coli O127:H6 (strain E2348/69 / EPEC).